A 319-amino-acid polypeptide reads, in one-letter code: Formimidoylglutamase (319 aa).

Positions 131, 154, 156, 158, 248, and 250 each coordinate Mn(2+).

Belongs to the arginase family. Mn(2+) is required as a cofactor.

The enzyme catalyses N-formimidoyl-L-glutamate + H2O = formamide + L-glutamate. The protein operates within amino-acid degradation; L-histidine degradation into L-glutamate; L-glutamate from N-formimidoyl-L-glutamate (hydrolase route): step 1/1. Catalyzes the conversion of N-formimidoyl-L-glutamate to L-glutamate and formamide. This Legionella pneumophila subsp. pneumophila (strain Philadelphia 1 / ATCC 33152 / DSM 7513) protein is Formimidoylglutamase.